Here is a 570-residue protein sequence, read N- to C-terminus: Methionine--tRNA ligase (570 aa).

The 'HIGH' region signature appears at 11–21 (PYVQTVPHLGN). Zn(2+) is bound by residues cysteine 143, cysteine 146, cysteine 156, and cysteine 159. A 'KMSKS' region motif is present at residues 333 to 337 (KFSKS). An ATP-binding site is contributed by lysine 336.

The protein belongs to the class-I aminoacyl-tRNA synthetase family. MetG type 1 subfamily. Zn(2+) serves as cofactor.

Its subcellular location is the cytoplasm. The catalysed reaction is tRNA(Met) + L-methionine + ATP = L-methionyl-tRNA(Met) + AMP + diphosphate. Functionally, is required not only for elongation of protein synthesis but also for the initiation of all mRNA translation through initiator tRNA(fMet) aminoacylation. The chain is Methionine--tRNA ligase from Pyrobaculum calidifontis (strain DSM 21063 / JCM 11548 / VA1).